The following is a 147-amino-acid chain: Two-component response regulator ORR11 (147 aa).

Residues 29-146 (HVLAVDDSSV…DVSRLFSRVL (118 aa)) enclose the Response regulatory domain. A 4-aspartylphosphate modification is found at D79.

The protein belongs to the ARR family. Type-A subfamily. Two-component system major event consists of a His-to-Asp phosphorelay between a sensor histidine kinase (HK) and a response regulator (RR). In plants, the His-to-Asp phosphorelay involves an additional intermediate named Histidine-containing phosphotransfer protein (HPt). This multistep phosphorelay consists of a His-Asp-His-Asp sequential transfer of a phosphate group between first a His and an Asp of the HK protein, followed by the transfer to a conserved His of the HPt protein and finally the transfer to an Asp in the receiver domain of the RR protein.

Functions as a response regulator involved in His-to-Asp phosphorelay signal transduction system. Phosphorylation of the Asp residue in the receiver domain activates the ability of the protein to promote the transcription of target genes. Type-A response regulators seem to act as negative regulators of the cytokinin signaling. This Oryza sativa subsp. indica (Rice) protein is Two-component response regulator ORR11.